The chain runs to 1156 residues: Condensin-2 complex subunit G2 (1156 aa).

The HEAT repeat unit spans residues 460-498 (MLPALKFCLHDNSEKVRVAFVDMLLKIKAVRAAKFWKIC). Positions 587 to 611 (PNEDTEDEDDDEGDGEGIVRGDSEK) are disordered. Positions 589–601 (EDTEDEDDDEGDG) are enriched in acidic residues.

In terms of assembly, component of the condensin-2 complex, which contains the smc2 and smc4 heterodimer, and three non SMC subunits that probably regulate the complex: ncaph2, ncapd3 and ncapg2.

The protein resides in the nucleus. Regulatory subunit of the condensin-2 complex, a complex which establishes mitotic chromosome architecture and is involved in physical rigidity of the chromatid axis. In Xenopus laevis (African clawed frog), this protein is Condensin-2 complex subunit G2 (ncapg2).